The primary structure comprises 242 residues: 1-(5-phosphoribosyl)-5-[(5-phosphoribosylamino)methylideneamino] imidazole-4-carboxamide isomerase (242 aa).

Aspartate 8 functions as the Proton acceptor in the catalytic mechanism. Catalysis depends on aspartate 129, which acts as the Proton donor.

Belongs to the HisA/HisF family.

The protein resides in the cytoplasm. It carries out the reaction 1-(5-phospho-beta-D-ribosyl)-5-[(5-phospho-beta-D-ribosylamino)methylideneamino]imidazole-4-carboxamide = 5-[(5-phospho-1-deoxy-D-ribulos-1-ylimino)methylamino]-1-(5-phospho-beta-D-ribosyl)imidazole-4-carboxamide. The protein operates within amino-acid biosynthesis; L-histidine biosynthesis; L-histidine from 5-phospho-alpha-D-ribose 1-diphosphate: step 4/9. The protein is 1-(5-phosphoribosyl)-5-[(5-phosphoribosylamino)methylideneamino] imidazole-4-carboxamide isomerase of Beijerinckia indica subsp. indica (strain ATCC 9039 / DSM 1715 / NCIMB 8712).